The chain runs to 175 residues: Major spike protein G (175 aa).

This sequence belongs to the microvirus G protein family. Pentamerizes and interacts with H protein, F and B pentamers to form 12S pre-assembly complex. Joining of twelve 12S complex form the procapsid.

It is found in the virion. Its subcellular location is the host cytoplasm. Attaches the circulating virion to the bacterial lipopolysaccharides which serve as receptor for the virus. Determines the phage host-range. Probably triggers with protein H the injection of the phage DNA into the host cytoplasm upon conformational changes induced by the interaction with host lipopolysaccharides. The polypeptide is Major spike protein G (G) (Escherichia coli C (Isolate Sanger)).